The sequence spans 581 residues: Bifunctional lycopene cyclase/phytoene synthase (581 aa).

Positions 1 to 243 (MGFDYALVHL…IVFGQLAFDN (243 aa)) are lycopene beta-cyclase. A run of 7 helical transmembrane segments spans residues 3-23 (FDYA…LTLL), 35-55 (KVAF…SYLI), 65-85 (HVII…FFVV), 120-140 (LKRL…WFCV), 152-172 (ILIW…QFII), 173-193 (GLPF…LWIV), and 221-241 (IEEA…QLAF). The phytoene synthase stretch occupies residues 250–581 (AFPHLFPDPS…RVLVAWRTLN (332 aa)).

In the N-terminal section; belongs to the lycopene beta-cyclase family. This sequence in the C-terminal section; belongs to the phytoene/squalene synthase family.

It is found in the membrane. The catalysed reaction is all-trans-lycopene = gamma-carotene. It carries out the reaction gamma-carotene = all-trans-beta-carotene. The enzyme catalyses 2 (2E,6E,10E)-geranylgeranyl diphosphate = 15-cis-phytoene + 2 diphosphate. Its pathway is carotenoid biosynthesis; beta-carotene biosynthesis. It functions in the pathway carotenoid biosynthesis; phytoene biosynthesis; all-trans-phytoene from geranylgeranyl diphosphate: step 1/1. Its function is as follows. Bifunctional enzyme that catalyzes the reactions from geranylgeranyl diphosphate to phytoene (phytoene synthase) and lycopene to beta-carotene via the intermediate gamma-carotene (lycopene cyclase). This Leptosphaeria maculans (strain JN3 / isolate v23.1.3 / race Av1-4-5-6-7-8) (Blackleg fungus) protein is Bifunctional lycopene cyclase/phytoene synthase.